The chain runs to 358 residues: 3-dehydroquinate synthase (358 aa).

Residues 72–77 (GGERVK), 106–110 (GALLD), 130–131 (ST), K143, and K151 contribute to the NAD(+) site. Residues E184, H245, and H261 each coordinate Zn(2+).

Belongs to the sugar phosphate cyclases superfamily. Dehydroquinate synthase family. NAD(+) is required as a cofactor. The cofactor is Co(2+). Zn(2+) serves as cofactor.

Its subcellular location is the cytoplasm. It carries out the reaction 7-phospho-2-dehydro-3-deoxy-D-arabino-heptonate = 3-dehydroquinate + phosphate. Its pathway is metabolic intermediate biosynthesis; chorismate biosynthesis; chorismate from D-erythrose 4-phosphate and phosphoenolpyruvate: step 2/7. Functionally, catalyzes the conversion of 3-deoxy-D-arabino-heptulosonate 7-phosphate (DAHP) to dehydroquinate (DHQ). In Aeropyrum pernix (strain ATCC 700893 / DSM 11879 / JCM 9820 / NBRC 100138 / K1), this protein is 3-dehydroquinate synthase (aroB).